Here is a 1562-residue protein sequence, read N- to C-terminus: Phospholipid-transporting ATPase dnf1 (1562 aa).

Disordered regions lie at residues 1–38 (MKSS…ADDG), 55–94 (LPLG…SDSR), 115–134 (TPST…KKAH), and 146–166 (PLDD…NGRP). Residues 1-275 (MKSSGIAGDS…IAIMQMIPGW (275 aa)) lie on the Extracellular side of the membrane. The span at 12–21 (GFETNFLNET) shows a compositional bias: polar residues. The segment covering 60 to 69 (DENELDEIDI) has biased composition (acidic residues). Residues 71 to 86 (GDSKKLDSVEVDESHD) are compositionally biased toward basic and acidic residues. The chain crosses the membrane as a helical span at residues 276-296 (STTGTYTTIIPLLIFISIAIL). Residues 297–574 (REGFDNYRRY…APSMQKVTNR (278 aa)) lie on the Cytoplasmic side of the membrane. Residues 347–406 (SQESASRSTIRSTDEREPERTSEDPPQLPPSPSSPSSPALSVKPNIDPQPPLYNSTLTTT) are disordered. Residues 358 to 369 (STDEREPERTSE) show a composition bias toward basic and acidic residues. Residues 372-381 (PQLPPSPSSP) show a composition bias toward pro residues. Residues 575–595 (IVIFIFALVVSMAIYCTAAYF) traverse the membrane as a helical segment. Topologically, residues 596 to 614 (VWQKKVERKLWYLTNSKLS) are extracellular. The chain crosses the membrane as a helical span at residues 615–635 (FVPILVSFIILYNTMVPISLY). The Cytoplasmic segment spans residues 636-1309 (VSMEIIRVFQ…YILGTFYKEQ (674 aa)). Aspartate 684 acts as the 4-aspartylphosphate intermediate in catalysis. ATP contacts are provided by aspartate 684, lysine 685, threonine 686, glutamate 794, phenylalanine 843, serine 845, lysine 848, and lysine 866. Mg(2+) is bound at residue aspartate 684. Threonine 686 is a binding site for Mg(2+). Serine 954 is subject to Phosphoserine. ATP contacts are provided by residues arginine 1022, threonine 1023, threonine 1102, glycine 1103, aspartate 1104, 1181-1188 (VIVIDGST), arginine 1216, and lysine 1222. Aspartate 1243 is a Mg(2+) binding site. Residues asparagine 1246 and aspartate 1247 each contribute to the ATP site. A helical transmembrane segment spans residues 1310–1330 (FFFLMQAIMQPFVGYTGQSLY). The Extracellular segment spans residues 1331 to 1332 (ES). Residues 1333 to 1353 (WGLTCFNTLFSSLCVIGLGIF) traverse the membrane as a helical segment. Residues 1354–1381 (EKDLSASTVIAVPELYQKGINNEAFNWR) are Cytoplasmic-facing. Residues 1382–1402 (VYFGWCSIAFIQAFLVFYVTY) form a helical membrane-spanning segment. Residues 1403–1414 (SLFGMKELNDNN) lie on the Extracellular side of the membrane. The chain crosses the membrane as a helical span at residues 1415-1435 (IFAYGQLIFTAAIFIMNFKLV). At 1436–1443 (FIEMQYIN) the chain is on the cytoplasmic side. Residues 1444 to 1464 (IISIIVLVLTSLAWFLFNIFI) traverse the membrane as a helical segment. Residues 1465 to 1490 (SEHYPDKNLYLARSQFLHHFGKNPSW) are Extracellular-facing. A helical membrane pass occupies residues 1491–1511 (WLTMLFVMVCALTIDIVAQML). Over 1512–1562 (RRTLRPTDTDIFVEMENDAFVRSRFEQESGEFLQANAPSVDEIEQYLKSRD) the chain is Cytoplasmic.

The protein belongs to the cation transport ATPase (P-type) (TC 3.A.3) family. Type IV subfamily. Mg(2+) serves as cofactor.

The protein resides in the golgi apparatus. It is found in the trans-Golgi network membrane. Its subcellular location is the endosome membrane. It carries out the reaction ATP + H2O + phospholipidSide 1 = ADP + phosphate + phospholipidSide 2.. It catalyses the reaction a 1,2-diacyl-sn-glycero-3-phosphocholine(out) + ATP + H2O = a 1,2-diacyl-sn-glycero-3-phosphocholine(in) + ADP + phosphate + H(+). The enzyme catalyses a 1,2-diacyl-sn-glycero-3-phosphoethanolamine(out) + ATP + H2O = a 1,2-diacyl-sn-glycero-3-phosphoethanolamine(in) + ADP + phosphate + H(+). Its function is as follows. Catalytic component of a P4-ATPase flippase complex which catalyzes the hydrolysis of ATP coupled to the transport of phosphatidylcholine and small amounts of phosphatidylethanolamine from the lumen to the cytosolic leaflet of the trans-Golgi network and ensures the maintenance of asymmetric distribution of phospholipids. May be involved in transport from early endosomes to the trans-Golgi network (TGN). The chain is Phospholipid-transporting ATPase dnf1 from Schizosaccharomyces pombe (strain 972 / ATCC 24843) (Fission yeast).